The sequence spans 1203 residues: DNA-directed RNA polymerase subunit beta (1203 aa).

A compositionally biased stretch (basic and acidic residues) spans 1174 to 1195 (AAQEAKAAFEAEEAEKATKAEA). Residues 1174 to 1203 (AAQEAKAAFEAEEAEKATKAEATEEAAEQE) form a disordered region.

The protein belongs to the RNA polymerase beta chain family. The RNAP catalytic core consists of 2 alpha, 1 beta, 1 beta' and 1 omega subunit. When a sigma factor is associated with the core the holoenzyme is formed, which can initiate transcription.

It catalyses the reaction RNA(n) + a ribonucleoside 5'-triphosphate = RNA(n+1) + diphosphate. Functionally, DNA-dependent RNA polymerase catalyzes the transcription of DNA into RNA using the four ribonucleoside triphosphates as substrates. This chain is DNA-directed RNA polymerase subunit beta, found in Streptococcus pneumoniae (strain P1031).